The following is a 769-amino-acid chain: Transferrin receptor protein 1 (769 aa).

At 1–70 (MMDQARSAFS…KPKRFNGFIC (70 aa)) the chain is on the cytoplasmic side. Positions 1 to 70 (MMDQARSAFS…KPKRFNGFIC (70 aa)) are mediates interaction with SH3BP4. 2 positions are modified to phosphoserine: Ser10 and Ser19. Tyr20 bears the Phosphotyrosine mark. Positions 20-23 (YTRF) match the Endocytosis signal motif. Thr21 bears the Phosphothreonine mark. At Ser24 the chain carries Phosphoserine. Positions 61–64 (KPKR) match the Stop-transfer sequence motif. The S-palmitoyl cysteine moiety is linked to residue Cys70. The chain crosses the membrane as a helical; Signal-anchor for type II membrane protein span at residues 71–91 (YGTIAIILFFLIGFMIGYLGY). The Extracellular segment spans residues 92-769 (CKRVEAKSEC…GDIWDIDNEF (678 aa)). The O-linked (GalNAc...) threonine glycan is linked to Thr107. The 91-residue stretch at 232 to 322 (SKAATVTGRL…GTGDPYTPGF (91 aa)) folds into the PA domain. N-linked (GlcNAc...) asparagine glycosylation is found at Asn260 and Asn326. Residues 578-769 (TMDVYEKLIQ…GDIWDIDNEF (192 aa)) form a ligand-binding region. The Cell attachment site motif lies at 655-657 (RGD). Residues Asn731 and Asn736 are each glycosylated (N-linked (GlcNAc...) asparagine).

This sequence belongs to the peptidase M28 family. M28B subfamily. In terms of assembly, homodimer; disulfide-linked. Binds one transferrin molecule per subunit. Interacts with SH3BP4. Homodimer; disulfide-linked. Binds one transferrin or HFE molecule per subunit. Binds the HLA class II histocompatibility antigen, DR1. Interacts with SH3BP3. Interacts with STEAP3; facilitates TFRC endocytosis in erythroid precursor cells. Stearoylated by ZDHHC6 which inhibits TFRC-mediated activation of the JNK pathway and promotes mitochondrial fragmentation. Stearoylation does not affect iron uptake. Post-translationally, N- and O-glycosylated, phosphorylated and palmitoylated.

Its subcellular location is the cell membrane. It localises to the melanosome. In terms of biological role, cellular uptake of iron occurs via receptor-mediated endocytosis of ligand-occupied transferrin receptor into specialized endosomes. Endosomal acidification leads to iron release. The apotransferrin-receptor complex is then recycled to the cell surface with a return to neutral pH and the concomitant loss of affinity of apotransferrin for its receptor. Transferrin receptor is necessary for development of erythrocytes and the nervous system. Positively regulates T and B cell proliferation through iron uptake. Acts as a lipid sensor that regulates mitochondrial fusion by regulating activation of the JNK pathway. When dietary levels of stearate (C18:0) are low, promotes activation of the JNK pathway, resulting in HUWE1-mediated ubiquitination and subsequent degradation of the mitofusin MFN2 and inhibition of mitochondrial fusion. When dietary levels of stearate (C18:0) are high, TFRC stearoylation inhibits activation of the JNK pathway and thus degradation of the mitofusin MFN2. Mediates uptake of NICOL1 into fibroblasts where it may regulate extracellular matrix production. This chain is Transferrin receptor protein 1 (TFRC), found in Felis catus (Cat).